Consider the following 78-residue polypeptide: Large ribosomal subunit protein bL28 (78 aa).

It belongs to the bacterial ribosomal protein bL28 family.

The sequence is that of Large ribosomal subunit protein bL28 from Acidithiobacillus ferrooxidans (strain ATCC 23270 / DSM 14882 / CIP 104768 / NCIMB 8455) (Ferrobacillus ferrooxidans (strain ATCC 23270)).